A 118-amino-acid polypeptide reads, in one-letter code: V-type proton ATPase subunit G 2 (118 aa).

The tract at residues 23–91 (ADARKRKARR…QGMQSSQQRN (69 aa)) is disordered. The span at 35 to 55 (QAKEEAQMEVEQYRREREQEF) shows a compositional bias: basic and acidic residues. 2 stretches are compositionally biased toward polar residues: residues 56 to 69 (QSKQ…QGNL) and 78 to 89 (RRQVQGMQSSQQ).

Belongs to the V-ATPase G subunit family. V-ATPase is a heteromultimeric enzyme made up of two complexes: the ATP-hydrolytic V1 complex and the proton translocation V0 complex. The V1 complex consists of three catalytic AB heterodimers that form a heterohexamer, three peripheral stalks each consisting of EG heterodimers, one central rotor including subunits D and F, and the regulatory subunits C and H. The proton translocation complex V0 consists of the proton transport subunit a, a ring of proteolipid subunits c9c'', rotary subunit d, subunits e and f, and the accessory subunits ATP6AP1/Ac45 and ATP6AP2/PRR.

The protein resides in the melanosome. It is found in the cytoplasmic vesicle. Its subcellular location is the clathrin-coated vesicle membrane. In terms of biological role, subunit of the V1 complex of vacuolar(H+)-ATPase (V-ATPase), a multisubunit enzyme composed of a peripheral complex (V1) that hydrolyzes ATP and a membrane integral complex (V0) that translocates protons. V-ATPase is responsible for acidifying and maintaining the pH of intracellular compartments and in some cell types, is targeted to the plasma membrane, where it is responsible for acidifying the extracellular environment. The sequence is that of V-type proton ATPase subunit G 2 (Atp6v1g2) from Mus musculus (Mouse).